The sequence spans 154 residues: Protein E6 (154 aa).

Zinc fingers lie at residues 30–66 (CVFC…CPRC) and 103–139 (CCKC…CLHC).

The protein belongs to the papillomaviridae E6 protein family. As to quaternary structure, forms homodimers. Interacts with ubiquitin-protein ligase UBE3A/E6-AP; this interaction stimulates UBE3A ubiquitin activity. Interacts with host TP53 and EP300; this interaction inhibits TP53 activity.

It is found in the host cytoplasm. The protein resides in the host nucleus. In terms of biological role, plays a major role in the induction and maintenance of cellular transformation. E6 associates with host UBE3A/E6-AP ubiquitin-protein ligase and modulates its activity. Sequesters tumor suppressor TP53 in the host cytoplasm and modulates its activity by interacting with host EP300 that results in the reduction of TP53 acetylation and activation. In turn, apoptosis induced by DNA damage is inhibited. E6 also protects host keratinocytes from apoptosis by mediating the degradation of host BAK1. May also inhibit host immune response. The polypeptide is Protein E6 (Homo sapiens (Human)).